Consider the following 860-residue polypeptide: MQEQYRPEEIESKVQQHWDEKRTFEVTEDESKEKYYCLSMLPYPSGRLHMGHVRNYTIGDVIARYQRMLGKNVLQPIGWDAFGLPAEGAAVKNNTAPAPWTYDNIAYMKNQLKMLGFGYDWSRELATCTPEYYRWEQKFFTELYKKGLVYKKTSAVNWCPNDQTVLANEQVIDGCCWRCDTKVERKEIPQWFIKITAYADELLNDLDKLDHWPDTVKTMQRNWIGRSEGVEITFDVNGYDNTLTVYTTRPDTFMGATYLAVAAGHPLAQKAAANNPELAAFIDECRNTKVAEADMATMEKKGVDTGFKAIHPLTGEAIPVWAANFVLMEYGTGAVMAVPGHDQRDYEFATKYGLTIKPVILAADGSEPDLSEQALTEKGVLFNSGEFNGLGFEDAFNAIADKLAAKGVGERKVNYRLRDWGVSRQRYWGAPIPMVTLEDGTVLPTPEDQLPVILPEDVVMDGITSPIKADPEWAKTTVNGQPALRETDTFDTFMESSWYYARYTCPQYNEGMLDPEAANYWLPVDIYIGGIEHAIMHLLYFRFFHKLMRDAGMVNSDEPAKQLLCQGMVLADAFYYVGENGERNWVSPVDAIVERDEKGRIVKAKDAAGHELVYTGMSKMSKSKNNGIDPQVMVERYGADTVRLFMMFASPADMTLEWQESGVEGANRFLKRVWKLVYEHTAKGEVAALNVDALSEDQKALRRDVHKTIAKVTDDIGRRQTFNTAIAAIMELMNKLAKAPQEGEQDRALMQEALLAVVRMLNPFTPHACFTLWEALKGEGDIDNAPWPVADDKAMVEDSTLVVVQVNGKVRGKITVPVNATEEQVRERAGQEHLVAKYLDGVTVRKVIYVPGKLLNLVVG.

The 'HIGH' region motif lies at 42–52; sequence PYPSGRLHMGH. A 'KMSKS' region motif is present at residues 619–623; it reads KMSKS. Lys-622 serves as a coordination point for ATP.

The protein belongs to the class-I aminoacyl-tRNA synthetase family.

It is found in the cytoplasm. The enzyme catalyses tRNA(Leu) + L-leucine + ATP = L-leucyl-tRNA(Leu) + AMP + diphosphate. The chain is Leucine--tRNA ligase from Citrobacter koseri (strain ATCC BAA-895 / CDC 4225-83 / SGSC4696).